A 284-amino-acid chain; its full sequence is Nucleotide-binding protein SO_3964 (284 aa).

Position 8–15 (8–15 (GRSGSGKS)) interacts with ATP. GTP is bound at residue 56 to 59 (DVRN).

This sequence belongs to the RapZ-like family.

Functionally, displays ATPase and GTPase activities. This Shewanella oneidensis (strain ATCC 700550 / JCM 31522 / CIP 106686 / LMG 19005 / NCIMB 14063 / MR-1) protein is Nucleotide-binding protein SO_3964.